The primary structure comprises 1136 residues: Protein stu-1 (1136 aa).

HEAT repeat units follow at residues 95-133 (TLPV…ERSV) and 167-205 (YVPT…KSDL). Disordered stretches follow at residues 524 to 554 (KDPH…MGAP), 567 to 794 (RAMA…QPQI), and 821 to 884 (TAGQ…LLDS). A compositionally biased stretch (low complexity) spans 595 to 622 (VSSTSQASVASASTASAVPAPTKSAFGA). Positions 659–668 (PAEPASPPSK) are enriched in pro residues. The span at 673–683 (TVTSPKTQTLV) shows a compositional bias: polar residues. The segment covering 701-716 (SSESGIPIPVSGISSP) has biased composition (low complexity). 2 stretches are compositionally biased toward polar residues: residues 777–793 (LPTQ…QQPQ) and 822–833 (AGQTQPQSTYTS).

Belongs to the CLASP family. In terms of assembly, interacts with microtubules.

Its subcellular location is the nucleus. It localises to the cytoplasm. The protein localises to the cytoskeleton. The protein resides in the spindle. Microtubule binding protein that promotes the stabilization of dynamic microtubules. Required for mitotic spindle formation. The polypeptide is Protein stu-1 (stu-1) (Neurospora crassa (strain ATCC 24698 / 74-OR23-1A / CBS 708.71 / DSM 1257 / FGSC 987)).